Consider the following 574-residue polypeptide: Zinc finger protein 394 (574 aa).

Ser-12 is subject to Phosphoserine. Lys-40 is covalently cross-linked (Glycyl lysine isopeptide (Lys-Gly) (interchain with G-Cter in SUMO2)). In terms of domain architecture, SCAN box spans 64–146; the sequence is RLHFRQLRYQ…AVVRALQRAL (83 aa). A KRAB domain is found at 155–230; it reads VTFEDMAVSL…LQEAFQGKHP (76 aa). The interval 182–202 is disordered; the sequence is ESAQKDSGSTVPPSLESRVEN. Glycyl lysine isopeptide (Lys-Gly) (interchain with G-Cter in SUMO2) cross-links involve residues Lys-203, Lys-228, and Lys-254. A disordered region spans residues 231–284; the sequence is LFSKCGSTHEDRVEKQSGNPLPLKLENSAEAEGLNSISDVNKNGSIEGEDSKNN. Residues 265–274 are compositionally biased toward polar residues; that stretch reads NSISDVNKNG. Lys-282 is covalently cross-linked (Glycyl lysine isopeptide (Lys-Gly) (interchain with G-Cter in SUMO2)). C2H2-type zinc fingers lie at residues 358–380, 386–408, 414–436, 442–463, 469–491, 497–519, and 525–547; these read YKCG…QRIH, YGCQ…QRTH, YTCL…QSTH, FKCE…QRLH, YKCE…HRIH, YGCS…QRIH, and YKCL…QRIH. Residue Lys-443 forms a Glycyl lysine isopeptide (Lys-Gly) (interchain with G-Cter in SUMO2) linkage.

This sequence belongs to the krueppel C2H2-type zinc-finger protein family.

The protein localises to the nucleus. In terms of biological role, may be involved in transcriptional regulation. In Pongo abelii (Sumatran orangutan), this protein is Zinc finger protein 394 (ZNF394).